Here is a 150-residue protein sequence, read N- to C-terminus: Dynein light chain Tctex-type protein 2B (150 aa).

The protein belongs to the dynein light chain Tctex-type family.

The protein resides in the dynein axonemal particle. Its function is as follows. Acts as one of several non-catalytic accessory components of the cytoplasmic dynein 2 complex (dynein-2 complex), a motor protein complex that drives the movement of cargos along microtubules within cilia and flagella in concert with the intraflagellar transport (IFT) system. Required for proper retrograde ciliary transport. In Danio rerio (Zebrafish), this protein is Dynein light chain Tctex-type protein 2B (dynlt2b).